Consider the following 593-residue polypeptide: UvrABC system protein C (593 aa).

The region spanning 13–91 is the GIY-YIG domain; sequence TTPGVYMMKD…IKEYRPKYNV (79 aa). One can recognise a UVR domain in the interval 202-237; it reads DEIVEELKKKMFEYADNLMFEKAQEIKNKITSLEQI.

Belongs to the UvrC family. In terms of assembly, interacts with UvrB in an incision complex.

It localises to the cytoplasm. Its function is as follows. The UvrABC repair system catalyzes the recognition and processing of DNA lesions. UvrC both incises the 5' and 3' sides of the lesion. The N-terminal half is responsible for the 3' incision and the C-terminal half is responsible for the 5' incision. The protein is UvrABC system protein C of Caldicellulosiruptor saccharolyticus (strain ATCC 43494 / DSM 8903 / Tp8T 6331).